Consider the following 103-residue polypeptide: Integration host factor subunit alpha (103 aa).

Residues 51 to 73 (FGNFQLRDKPQRPGRNPKTGEEI) form a disordered region.

Belongs to the bacterial histone-like protein family. Heterodimer of an alpha and a beta chain.

This protein is one of the two subunits of integration host factor, a specific DNA-binding protein that functions in genetic recombination as well as in transcriptional and translational control. In Azoarcus sp. (strain BH72), this protein is Integration host factor subunit alpha.